A 207-amino-acid polypeptide reads, in one-letter code: Guanylate kinase (207 aa).

In terms of domain architecture, Guanylate kinase-like spans 5 to 183; the sequence is GTLYIISAPS…ALYELEAIVE (179 aa). ATP is bound at residue 12-19; that stretch reads APSGAGKT.

This sequence belongs to the guanylate kinase family.

Its subcellular location is the cytoplasm. It carries out the reaction GMP + ATP = GDP + ADP. Functionally, essential for recycling GMP and indirectly, cGMP. This chain is Guanylate kinase, found in Alcanivorax borkumensis (strain ATCC 700651 / DSM 11573 / NCIMB 13689 / SK2).